Here is a 154-residue protein sequence, read N- to C-terminus: tRNA (cytidine(34)-2'-O)-methyltransferase (154 aa).

S-adenosyl-L-methionine-binding residues include Leu-78, Gly-100, Leu-122, and Ser-130.

Belongs to the class IV-like SAM-binding methyltransferase superfamily. RNA methyltransferase TrmH family. TrmL subfamily. As to quaternary structure, homodimer.

Its subcellular location is the cytoplasm. It catalyses the reaction cytidine(34) in tRNA + S-adenosyl-L-methionine = 2'-O-methylcytidine(34) in tRNA + S-adenosyl-L-homocysteine + H(+). The enzyme catalyses 5-carboxymethylaminomethyluridine(34) in tRNA(Leu) + S-adenosyl-L-methionine = 5-carboxymethylaminomethyl-2'-O-methyluridine(34) in tRNA(Leu) + S-adenosyl-L-homocysteine + H(+). Its function is as follows. Methylates the ribose at the nucleotide 34 wobble position in the two leucyl isoacceptors tRNA(Leu)(CmAA) and tRNA(Leu)(cmnm5UmAA). Catalyzes the methyl transfer from S-adenosyl-L-methionine to the 2'-OH of the wobble nucleotide. The sequence is that of tRNA (cytidine(34)-2'-O)-methyltransferase from Methylovorus glucosotrophus (strain SIP3-4).